Here is a 500-residue protein sequence, read N- to C-terminus: MQDQYILALDQGTTSSRAMLFDRQGNIVSIAQKEFEQIYPQPGWVEHDPQEIWSTQAGVAAEAVTRTGLNGTSIAAIGITNQRETTIVWDRETGQPVYNAIVWQDRRTADFCDSLKKQGLEAKVRAKTGLPIDSYFSATKIRWILDNVPGARDKARQGKLAFGTVDSWLVWNFTKHELHVTDVTNASRTMLFNIHTRQWDDELLELLDIPRSMLPEVKASSEIYGHTKTTVFASKIPLAGIAGDQHAALFGQMCTTSGMVKNTYGTGCFLMMNTGDKPIESKNNLVTTIAWQIGDDVQYALEGSIFIAGAVVQWLRDGLGIIKTAAEIEALAASVPHSDGVYLVPAFAGLGAPHWNARARGSLFGVTRGTRDAHLARAALDAIAYQSLDVLAAMEADSGLSIGELRVDGGASANNLLMQFQADLLGVDAVRPQITETTALGAAYLAGLAIGYWKNLDEVRSQWQLDRRFAPSMPKQQVERCMAGWQRAVRAAKAWADDAQ.

An ADP-binding site is contributed by Thr-13. ATP-binding residues include Thr-13, Thr-14, and Ser-15. Position 13 (Thr-13) interacts with sn-glycerol 3-phosphate. Residue Arg-17 coordinates ADP. Residues Arg-83, Glu-84, Tyr-135, and Asp-244 each coordinate sn-glycerol 3-phosphate. Residues Arg-83, Glu-84, Tyr-135, Asp-244, and Gln-245 each contribute to the glycerol site. ADP-binding residues include Thr-266 and Gly-309. Residues Thr-266, Gly-309, Gln-313, and Gly-410 each contribute to the ATP site. ADP contacts are provided by Gly-410 and Asn-414.

It belongs to the FGGY kinase family.

The enzyme catalyses glycerol + ATP = sn-glycerol 3-phosphate + ADP + H(+). The protein operates within polyol metabolism; glycerol degradation via glycerol kinase pathway; sn-glycerol 3-phosphate from glycerol: step 1/1. Its activity is regulated as follows. Inhibited by fructose 1,6-bisphosphate (FBP). Its function is as follows. Key enzyme in the regulation of glycerol uptake and metabolism. Catalyzes the phosphorylation of glycerol to yield sn-glycerol 3-phosphate. The chain is Glycerol kinase from Burkholderia multivorans (strain ATCC 17616 / 249).